Consider the following 86-residue polypeptide: Exodeoxyribonuclease 7 small subunit (86 aa).

This sequence belongs to the XseB family. In terms of assembly, heterooligomer composed of large and small subunits.

The protein resides in the cytoplasm. It catalyses the reaction Exonucleolytic cleavage in either 5'- to 3'- or 3'- to 5'-direction to yield nucleoside 5'-phosphates.. In terms of biological role, bidirectionally degrades single-stranded DNA into large acid-insoluble oligonucleotides, which are then degraded further into small acid-soluble oligonucleotides. In Xanthomonas axonopodis pv. citri (strain 306), this protein is Exodeoxyribonuclease 7 small subunit.